The chain runs to 317 residues: Probable GTP 3',8-cyclase (317 aa).

The 220-residue stretch at 4–223 (RYGRPLEDLR…KSEIREKHFR (220 aa)) folds into the Radical SAM core domain. Residue Arg-13 coordinates GTP. Residues Cys-20, Cys-24, and Cys-27 each contribute to the [4Fe-4S] cluster site. GTP is bound at residue Lys-61. Gly-65 provides a ligand contact to S-adenosyl-L-methionine. Position 91 (Thr-91) interacts with GTP. Ser-115 provides a ligand contact to S-adenosyl-L-methionine. Lys-152 contacts GTP. [4Fe-4S] cluster is bound by residues Cys-246 and Cys-249. 251–253 (RVR) provides a ligand contact to GTP. A [4Fe-4S] cluster-binding site is contributed by Cys-263.

The protein belongs to the radical SAM superfamily. MoaA family. The cofactor is [4Fe-4S] cluster.

The enzyme catalyses GTP + AH2 + S-adenosyl-L-methionine = (8S)-3',8-cyclo-7,8-dihydroguanosine 5'-triphosphate + 5'-deoxyadenosine + L-methionine + A + H(+). Its pathway is cofactor biosynthesis; molybdopterin biosynthesis. In terms of biological role, catalyzes the cyclization of GTP to (8S)-3',8-cyclo-7,8-dihydroguanosine 5'-triphosphate. This chain is Probable GTP 3',8-cyclase, found in Metallosphaera sedula (strain ATCC 51363 / DSM 5348 / JCM 9185 / NBRC 15509 / TH2).